The primary structure comprises 911 residues: General transcription factor 3C polypeptide 2 (911 aa).

2 disordered regions span residues 34 to 187 and 205 to 297; these read LDVK…RRRA and ALPA…MAPN. The span at 35–46 shows a compositional bias: polar residues; the sequence is DVKTSSEMTSAE. Position 63 is a phosphoserine (S63). Residues 64–81 are compositionally biased toward basic and acidic residues; sequence PDQRRLPPEQESLSRLEQ. The segment covering 92 to 112 has biased composition (basic residues); that stretch reads SKPRASKPGRKRGGRTRKGPK. The span at 114 to 123 shows a compositional bias: pro residues; that stretch reads PQQPNPPSAP. S132, S165, S167, S220, and S260 each carry phosphoserine. Residues 253-262 show a composition bias toward acidic residues; that stretch reads EAEDVEESEG. A compositionally biased stretch (low complexity) spans 263 to 275; it reads PSESSSEPEPAVP. 2 WD repeats span residues 465 to 521 and 552 to 593; these read CDNG…ALLA and SECG…PLQR. The residue at position 597 (S597) is a Phosphoserine. Residues 611-651 form a WD 3 repeat; sequence AHDQAVRTLQWCKANSHFLASAGSDRKIKFWDLRRPYEPIN. The tract at residues 765–785 is disordered; that stretch reads SPEGPDHSSASSGVPNPPKAR. One copy of the WD 4 repeat lies at 832–874; it reads LQLEAIHKVRFSPNLDSYGWLVSGGQSGLVRIHFVRGLASPLG. Phosphoserine is present on residues S871, S892, and S893. The segment at 889–911 is disordered; that stretch reads FQPSSPTRRPGFSPTSHRLLPTP. Position 895 is a phosphothreonine (T895). S901 is subject to Phosphoserine.

Part of the TFIIIC subcomplex TFIIIC2, consisting of six subunits, GTF3C1, GTF3C2, GTF3C3, GTF3C4, GTF3C5 and GTF3C6.

The protein localises to the nucleus. Its function is as follows. Required for RNA polymerase III-mediated transcription. Component of TFIIIC that initiates transcription complex assembly on tRNA and is required for transcription of 5S rRNA and other stable nuclear and cytoplasmic RNAs. May play a direct role in stabilizing interactions of TFIIIC2 with TFIIIC1. The protein is General transcription factor 3C polypeptide 2 (GTF3C2) of Pongo abelii (Sumatran orangutan).